Consider the following 317-residue polypeptide: Testis-expressed protein 19.2 (317 aa).

Positions 64 to 75 (MELSEASSEPEE) are enriched in acidic residues. Residues 64–113 (MELSEASSEPEEWPGLSGGEGQGHLPHGISVSAGSGAQGPQPVPTELGPQ) are disordered. The interval 101-145 (QGPQPVPTELGPQEAVPLDLGPEDAEWTQALPWRFDGLSPCSHWL) is important for interaction with piRNA.

In terms of assembly, interacts with UBR2. Interacts with piRNA-associated proteins DDX4, EDC4, MAEL, PIWIL1, PIWIL2, RANBP9 and TDRD6. Specifically expressed in somatic cells of male gonad lineage.

Its subcellular location is the cytoplasm. Functionally, may be required during spermatogenesis, probably by participating in the repression of retrotransposable elements and prevent their mobilization. With its paralog, Tex19.1, collaborates with the Piwi-interacting RNA (piRNA) pathway, which mediates the repression of transposable elements during meiosis by forming complexes composed of piRNAs and Piwi proteins. Interacts with Piwi proteins and directly binds piRNAs, a class of 24 to 30 nucleotide RNAs that are generated by a Dicer-independent mechanism and are primarily derived from transposons and other repeated sequence elements. The sequence is that of Testis-expressed protein 19.2 (Tex19.2) from Mus musculus (Mouse).